We begin with the raw amino-acid sequence, 115 residues long: Selenoprotein K homolog (115 aa).

The helical transmembrane segment at 29-49 (FIWGILNQITFFFSTLIGGTV) threads the bilayer. Residues 48 to 115 (TVEPRRRPNN…NSASGSUGPK (68 aa)) are disordered. Over residues 58–84 (QGGGRRLAGFDGNGNVTGGSGVGGSGP) the composition is skewed to gly residues. Polar residues predominate over residues 104–115 (ACNSASGSUGPK). A non-standard amino acid (selenocysteine) is located at residue Sec112.

Belongs to the selenoprotein K family.

It localises to the membrane. The polypeptide is Selenoprotein K homolog (selk) (Dictyostelium discoideum (Social amoeba)).